A 385-amino-acid chain; its full sequence is tRNA (guanine(26)-N(2))-dimethyltransferase (385 aa).

The region spanning 1 to 379 (MNITEGVVEL…ATIAEIRSAT (379 aa)) is the Trm1 methyltransferase domain. 5 residues coordinate S-adenosyl-L-methionine: Arg-37, Arg-67, Asp-82, Asp-108, and Ala-109. Residues Cys-247, Cys-250, Cys-267, and Cys-270 each contribute to the Zn(2+) site.

The protein belongs to the class I-like SAM-binding methyltransferase superfamily. Trm1 family.

The catalysed reaction is guanosine(26) in tRNA + 2 S-adenosyl-L-methionine = N(2)-dimethylguanosine(26) in tRNA + 2 S-adenosyl-L-homocysteine + 2 H(+). Its function is as follows. Dimethylates a single guanine residue at position 26 of a number of tRNAs using S-adenosyl-L-methionine as donor of the methyl groups. In Haloquadratum walsbyi (strain DSM 16790 / HBSQ001), this protein is tRNA (guanine(26)-N(2))-dimethyltransferase.